A 292-amino-acid polypeptide reads, in one-letter code: Homoserine kinase (292 aa).

Position 84-94 (84-94) interacts with ATP; the sequence is PLSRGLGSSSA.

It belongs to the GHMP kinase family. Homoserine kinase subfamily.

The protein resides in the cytoplasm. The enzyme catalyses L-homoserine + ATP = O-phospho-L-homoserine + ADP + H(+). Its pathway is amino-acid biosynthesis; L-threonine biosynthesis; L-threonine from L-aspartate: step 4/5. Functionally, catalyzes the ATP-dependent phosphorylation of L-homoserine to L-homoserine phosphate. This Campylobacter jejuni subsp. jejuni serotype O:6 (strain 81116 / NCTC 11828) protein is Homoserine kinase.